The sequence spans 2353 residues: C2 domain-containing protein 3 (2353 aa).

The disordered stretch occupies residues 1 to 27; it reads MKQRKGQGSGGSRGRKKRGLSDISPST. A Phosphoserine modification is found at serine 466. 2 disordered regions span residues 488–508 and 549–568; these read KVLE…RNRN and GVPP…AGPP. The segment covering 496–507 has biased composition (basic residues); it reads KLKKRSAGKRNR. Positions 521-678 constitute a C2 1 domain; that stretch reads DAQTMTLSVD…IQSELLSFSD (158 aa). Serine 728 is subject to Phosphoserine. C2 domains lie at 787–919, 985–1147, 1171–1339, and 1403–1533; these read SHNL…SRLL, QPTA…HRED, SSGL…TGWY, and EPAT…TLTV. The interval 1569 to 1591 is disordered; sequence HELDSMDCSSHSESEQLPRRNDE. Residues 1617 to 1745 enclose the C2 6 domain; it reads TTAEVRLTQE…SGFQFVCGWY (129 aa). A disordered region spans residues 1822–1846; sequence SKELDFSSPGRSDTTRSQASRHEEH. Polar residues predominate over residues 1830 to 1839; sequence PGRSDTTRSQ. Serine 1891 is subject to Phosphoserine. 4 disordered regions span residues 1972 to 2032, 2084 to 2118, 2130 to 2269, and 2301 to 2334; these read ALSS…NGGR, TSPW…PGPF, LSSP…QSLL, and PAAT…LNLP. Residues 2007–2016 are compositionally biased toward basic and acidic residues; that stretch reads PLVRAPDKGT. Polar residues predominate over residues 2084 to 2098; sequence TSPWSSVISDTSEVI. A phosphoserine mark is found at serine 2114 and serine 2132. Residues 2181-2198 show a composition bias toward polar residues; it reads SGAQQSSTFVGWSSPQTD. Residues 2236–2253 are compositionally biased toward basic and acidic residues; the sequence is SRRENHKGPPIDSSDIRQ. Residues 2254–2267 show a composition bias toward polar residues; that stretch reads RQVTTGSETSTKQS.

Interacts with IFT88, BBS4 and PCM1. Interacts with OFD1; OFD1 may act as a negative regulator of C2CD3. Associates with the BBSome complex.

The protein resides in the cytoplasm. It is found in the cytoskeleton. Its subcellular location is the cilium basal body. It localises to the microtubule organizing center. The protein localises to the centrosome. The protein resides in the centriole. Component of the centrioles that acts as a positive regulator of centriole elongation. Promotes assembly of centriolar distal appendage, a structure at the distal end of the mother centriole that acts as an anchor of the cilium, and is required for recruitment of centriolar distal appendages proteins CEP83, SCLT1, CEP89, FBF1 and CEP164. Not required for centriolar satellite integrity or RAB8 activation. Required for primary cilium formation. Required for sonic hedgehog/SHH signaling and for proteolytic processing of GLI3. The chain is C2 domain-containing protein 3 (C2CD3) from Homo sapiens (Human).